Here is a 430-residue protein sequence, read N- to C-terminus: Tol-Pal system protein TolB (430 aa).

The signal sequence occupies residues 1 to 21 (MKQALRVAFGFLILWASVLHA).

Belongs to the TolB family. As to quaternary structure, the Tol-Pal system is composed of five core proteins: the inner membrane proteins TolA, TolQ and TolR, the periplasmic protein TolB and the outer membrane protein Pal. They form a network linking the inner and outer membranes and the peptidoglycan layer.

It is found in the periplasm. In terms of biological role, part of the Tol-Pal system, which plays a role in outer membrane invagination during cell division and is important for maintaining outer membrane integrity. TolB occupies a key intermediary position in the Tol-Pal system because it communicates directly with both membrane-embedded components, Pal in the outer membrane and TolA in the inner membrane. The sequence is that of Tol-Pal system protein TolB from Shigella dysenteriae serotype 1 (strain Sd197).